We begin with the raw amino-acid sequence, 440 residues long: Glycerate 2-kinase (440 aa).

A substrate-binding site is contributed by lysine 58.

Belongs to the glycerate kinase type-1 family. In terms of assembly, homodimer. It depends on Mg(2+) as a cofactor. Requires Ni(2+) as cofactor. Mn(2+) serves as cofactor. Co(2+) is required as a cofactor.

The catalysed reaction is (R)-glycerate + ATP = (2R)-2-phosphoglycerate + ADP + H(+). Functionally, catalyzes the ATP-dependent phosphorylation of D-glycerate to 2-phosphoglycerate. It can also utilize GTP, CTP, UTP, ADP or pyrophosphate as phosphate donor. This is Glycerate 2-kinase (gck) from Pyrococcus horikoshii (strain ATCC 700860 / DSM 12428 / JCM 9974 / NBRC 100139 / OT-3).